The chain runs to 684 residues: Cleavage and polyadenylation specificity factor subunit 3 (684 aa).

At S2 the chain carries N-acetylserine. 6 residues coordinate Zn(2+): H71, H73, D75, H76, H158, and D179. H396 functions as the Proton donor in the catalytic mechanism. H418 is a Zn(2+) binding site. Residues K462, K465, and K545 each participate in a glycyl lysine isopeptide (Lys-Gly) (interchain with G-Cter in SUMO) cross-link. S659 carries the post-translational modification Phosphoserine. T681 carries the phosphothreonine modification.

The protein belongs to the metallo-beta-lactamase superfamily. RNA-metabolizing metallo-beta-lactamase-like family. CPSF3 subfamily. As to quaternary structure, component of the cleavage and polyadenylation specificity factor (CPSF) complex, composed of CPSF1, CPSF2, CPSF3, CPSF4 and FIP1L1. Interacts with CPSF2, CSTF2 and SYMPK. Interacts with TUT1; the interaction is direct and mediates the recruitment of the CPSF complex on the 3'UTR of pre-mRNAs. Interacts with WDR33. Interacts with ZC3H3. The cofactor is Zn(2+). Sumoylated on Lys-462, Lys-465 and Lys-545, preferentially by SUMO3.

The protein resides in the nucleus. In terms of biological role, component of the cleavage and polyadenylation specificity factor (CPSF) complex that plays a key role in pre-mRNA 3'-end formation, recognizing the AAUAAA signal sequence and interacting with poly(A) polymerase and other factors to bring about cleavage and poly(A) addition. Has endonuclease activity, and functions as an mRNA 3'-end-processing endonuclease. Also involved in the histone 3'-end pre-mRNA processing. U7 snRNP-dependent protein that induces both the 3'-endoribonucleolytic cleavage of histone pre-mRNAs and acts as a 5' to 3' exonuclease for degrading the subsequent downstream cleavage product (DCP) of mature histone mRNAs. Cleavage occurs after the 5'-ACCCA-3' sequence in the histone pre-mRNA leaving a 3'hydroxyl group on the upstream fragment containing the stem loop (SL) and 5' phosphate on the downstream cleavage product (DCP) starting with CU nucleotides. The U7-dependent 5' to 3' exonuclease activity is processive and degrades the DCP RNA substrate even after complete removal of the U7-binding site. Binds to the downstream cleavage product (DCP) of histone pre-mRNAs and the cleaved DCP RNA substrate in a U7 snRNP dependent manner. Required for entering/progressing through S-phase of the cell cycle. Required for the selective processing of microRNAs (miRNAs) during embryonic stem cell differentiation via its interaction with ISY1. Required for the biogenesis of all miRNAs from the pri-miR-17-92 primary transcript except miR-92a. Only required for the biogenesis of miR-290 and miR-96 from the pri-miR-290-295 and pri-miR-96-183 primary transcripts, respectively. This Homo sapiens (Human) protein is Cleavage and polyadenylation specificity factor subunit 3 (CPSF3).